Consider the following 365-residue polypeptide: Phospho-N-acetylmuramoyl-pentapeptide-transferase (365 aa).

10 helical membrane-spanning segments follow: residues 22–42, 74–94, 95–115, 134–154, 168–188, 201–221, 240–260, 267–287, 292–312, and 342–362; these read YISV…LALG, TMGG…WGDL, TSIY…IGFF, KFAL…YLLS, SLYI…IING, GLAI…AYIE, LAEV…FLWF, VFMG…IAVM, LIFF…MLQV, and KVVI…LAAI.

Belongs to the glycosyltransferase 4 family. MraY subfamily. The cofactor is Mg(2+).

It is found in the cell inner membrane. It carries out the reaction UDP-N-acetyl-alpha-D-muramoyl-L-alanyl-gamma-D-glutamyl-meso-2,6-diaminopimeloyl-D-alanyl-D-alanine + di-trans,octa-cis-undecaprenyl phosphate = di-trans,octa-cis-undecaprenyl diphospho-N-acetyl-alpha-D-muramoyl-L-alanyl-D-glutamyl-meso-2,6-diaminopimeloyl-D-alanyl-D-alanine + UMP. It functions in the pathway cell wall biogenesis; peptidoglycan biosynthesis. Its function is as follows. Catalyzes the initial step of the lipid cycle reactions in the biosynthesis of the cell wall peptidoglycan: transfers peptidoglycan precursor phospho-MurNAc-pentapeptide from UDP-MurNAc-pentapeptide onto the lipid carrier undecaprenyl phosphate, yielding undecaprenyl-pyrophosphoryl-MurNAc-pentapeptide, known as lipid I. The protein is Phospho-N-acetylmuramoyl-pentapeptide-transferase of Francisella tularensis subsp. novicida (strain U112).